Consider the following 469-residue polypeptide: 6-phospho-beta-galactosidase (469 aa).

Residues Gln19, His116, Asn159, Glu160, and Asn297 each coordinate D-galactose 6-phosphate. Catalysis depends on Glu160, which acts as the Proton donor. The Nucleophile role is filled by Glu375. The D-galactose 6-phosphate site is built by Ser428, Trp429, Lys435, and Tyr437.

The protein belongs to the glycosyl hydrolase 1 family.

It carries out the reaction a 6-phospho-beta-D-galactoside + H2O = D-galactose 6-phosphate + an alcohol. It participates in carbohydrate metabolism; lactose degradation; D-galactose 6-phosphate and beta-D-glucose from lactose 6-phosphate: step 1/1. In Streptococcus equi subsp. zooepidemicus (strain MGCS10565), this protein is 6-phospho-beta-galactosidase.